We begin with the raw amino-acid sequence, 181 residues long: Ribulose bisphosphate carboxylase small subunit 3B, chloroplastic (181 aa).

The transit peptide at 1–54 (MASSMLSSAAVVTSPAQATMVAPFTGLKSSAAFPVTRKTNKDITSIASNGGRVS) directs the protein to the chloroplast.

The protein belongs to the RuBisCO small chain family. Heterohexadecamer of 8 large and 8 small subunits.

It localises to the plastid. Its subcellular location is the chloroplast. Its function is as follows. RuBisCO catalyzes two reactions: the carboxylation of D-ribulose 1,5-bisphosphate, the primary event in carbon dioxide fixation, as well as the oxidative fragmentation of the pentose substrate. Both reactions occur simultaneously and in competition at the same active site. Although the small subunit is not catalytic it is essential for maximal activity. The protein is Ribulose bisphosphate carboxylase small subunit 3B, chloroplastic (RBCS-3B) of Arabidopsis thaliana (Mouse-ear cress).